A 348-amino-acid polypeptide reads, in one-letter code: Nicotinate-nucleotide--dimethylbenzimidazole phosphoribosyltransferase (348 aa).

E317 acts as the Proton acceptor in catalysis.

The protein belongs to the CobT family.

The enzyme catalyses 5,6-dimethylbenzimidazole + nicotinate beta-D-ribonucleotide = alpha-ribazole 5'-phosphate + nicotinate + H(+). The protein operates within nucleoside biosynthesis; alpha-ribazole biosynthesis; alpha-ribazole from 5,6-dimethylbenzimidazole: step 1/2. Catalyzes the synthesis of alpha-ribazole-5'-phosphate from nicotinate mononucleotide (NAMN) and 5,6-dimethylbenzimidazole (DMB). This Clostridioides difficile (strain 630) (Peptoclostridium difficile) protein is Nicotinate-nucleotide--dimethylbenzimidazole phosphoribosyltransferase.